An 86-amino-acid polypeptide reads, in one-letter code: MANIKSAIKRVKTAEKRRVANVQRKSSMRSAIKAVETFATEGNKEQALVAFNTASKKIDKAAAKGLIHSNKAGRDKSRLARLVNAL.

This sequence belongs to the bacterial ribosomal protein bS20 family.

In terms of biological role, binds directly to 16S ribosomal RNA. In Exiguobacterium sibiricum (strain DSM 17290 / CCUG 55495 / CIP 109462 / JCM 13490 / 255-15), this protein is Small ribosomal subunit protein bS20.